The sequence spans 1310 residues: Major viral transcription factor ICP4 homolog (1310 aa).

3 disordered regions span residues 117 to 271, 285 to 454, and 636 to 696; these read AGAR…GPVE, GAKA…TPII, and GSSP…SLLD. The span at 341–350 shows a compositional bias: basic and acidic residues; that stretch reads PVEKKPKSRE. Composition is skewed to low complexity over residues 351–364, 392–407, and 648–666; these read FVSS…WGSS, PSPS…DGGS, and PSPT…SAAA. Residues 677–685 carry the Nuclear localization signal motif; sequence RLRTPRKRK. Ser686 and Ser722 each carry phosphoserine; by VZV ORF66. Disordered regions lie at residues 1195-1258 and 1282-1310; these read RFVF…SFGV and ELLS…QSRG. Positions 1217-1227 are enriched in basic and acidic residues; the sequence is RTADDREHALE. The segment covering 1228–1250 has biased composition (acidic residues); it reads PDDWEVGCEDAWDSEEGGGDDGD.

It belongs to the herpesviridae ICP4 family. Interacts with IE4 and IE63. Interacts with human USF1 and SP1. In terms of processing, phosphorylated by ORF66 protein kinase on Ser-686 and Ser-722. Also phosphorylated by ORF47 protein kinase and by human CSNK2A1/CKII.

The protein localises to the host nucleus. It is found in the host cytoplasm. The protein resides in the virion tegument. Its function is as follows. Transcriptional transactivator. May interact with and recruit specific components of the general transcription machinery to viral promoters and stabilize their formation for transcription initiation. Negatively regulates its own transcription. This immediate early (EI) protein may be necessary in virion for viral pathogenesis. This is Major viral transcription factor ICP4 homolog from Homo sapiens (Human).